The chain runs to 348 residues: dTDP-glucose 4,6-dehydratase (348 aa).

NAD(+)-binding positions include 15–16 (FI), 37–40 (DKLT), 62–63 (DI), and 82–86 (YAAES). Positions 86 and 88 each coordinate substrate. An NAD(+)-binding site is contributed by T101. Substrate is bound at residue T125. D126 acts as the Proton donor in catalysis. Residues E127 and Y161 each act as proton acceptor in the active site. Residue 161–165 (YSSTK) participates in NAD(+) binding. Substrate is bound at residue N190. N191 provides a ligand contact to NAD(+). Substrate-binding positions include 200 to 205 (KFIPRQ), 216 to 218 (KLY), R225, N260, and 283 to 287 (DRAGH).

The protein belongs to the NAD(P)-dependent epimerase/dehydratase family. dTDP-glucose dehydratase subfamily. In terms of assembly, homodimer. Requires NAD(+) as cofactor.

It catalyses the reaction dTDP-alpha-D-glucose = dTDP-4-dehydro-6-deoxy-alpha-D-glucose + H2O. It participates in carbohydrate biosynthesis; dTDP-L-rhamnose biosynthesis. Functionally, catalyzes the dehydration of dTDP-D-glucose to form dTDP-6-deoxy-D-xylo-4-hexulose via a three-step process involving oxidation, dehydration and reduction. The polypeptide is dTDP-glucose 4,6-dehydratase (rmlB) (Streptococcus mutans serotype c (strain ATCC 700610 / UA159)).